The sequence spans 654 residues: Glutamyl-tRNA(Gln) amidotransferase subunit B, mitochondrial (654 aa).

A mitochondrion-targeting transit peptide spans Met1–Glu8. The interval Asp79–Thr101 is disordered.

It belongs to the GatB/GatE family. GatB subfamily. As to quaternary structure, subunit of the heterotrimeric GatCAB amidotransferase (AdT) complex, composed of A, B and C subunits.

Its subcellular location is the mitochondrion. It carries out the reaction L-glutamyl-tRNA(Gln) + L-glutamine + ATP + H2O = L-glutaminyl-tRNA(Gln) + L-glutamate + ADP + phosphate + H(+). In terms of biological role, allows the formation of correctly charged Gln-tRNA(Gln) through the transamidation of misacylated Glu-tRNA(Gln) in the mitochondria. The reaction takes place in the presence of glutamine and ATP through an activated gamma-phospho-Glu-tRNA(Gln). The sequence is that of Glutamyl-tRNA(Gln) amidotransferase subunit B, mitochondrial from Pyricularia oryzae (strain 70-15 / ATCC MYA-4617 / FGSC 8958) (Rice blast fungus).